Reading from the N-terminus, the 294-residue chain is UDP-3-O-acyl-N-acetylglucosamine deacetylase (294 aa).

Residues His75, His232, and Asp236 each coordinate Zn(2+). The active-site Proton donor is His259.

This sequence belongs to the LpxC family. The cofactor is Zn(2+).

It carries out the reaction a UDP-3-O-[(3R)-3-hydroxyacyl]-N-acetyl-alpha-D-glucosamine + H2O = a UDP-3-O-[(3R)-3-hydroxyacyl]-alpha-D-glucosamine + acetate. The protein operates within glycolipid biosynthesis; lipid IV(A) biosynthesis; lipid IV(A) from (3R)-3-hydroxytetradecanoyl-[acyl-carrier-protein] and UDP-N-acetyl-alpha-D-glucosamine: step 2/6. Catalyzes the hydrolysis of UDP-3-O-myristoyl-N-acetylglucosamine to form UDP-3-O-myristoylglucosamine and acetate, the committed step in lipid A biosynthesis. This chain is UDP-3-O-acyl-N-acetylglucosamine deacetylase, found in Campylobacter hominis (strain ATCC BAA-381 / DSM 21671 / CCUG 45161 / LMG 19568 / NCTC 13146 / CH001A).